The chain runs to 274 residues: Dermonecrotic toxin SdSicTox-betaIIB1biv (274 aa).

The active site involves H5. 2 residues coordinate Mg(2+): E25 and D27. H41 (nucleophile) is an active-site residue. 2 cysteine pairs are disulfide-bonded: C45–C51 and C47–C190. Position 85 (D85) interacts with Mg(2+).

The protein belongs to the arthropod phospholipase D family. Class II subfamily. Mg(2+) serves as cofactor. Expressed by the venom gland.

It localises to the secreted. The catalysed reaction is an N-(acyl)-sphingosylphosphocholine = an N-(acyl)-sphingosyl-1,3-cyclic phosphate + choline. It carries out the reaction an N-(acyl)-sphingosylphosphoethanolamine = an N-(acyl)-sphingosyl-1,3-cyclic phosphate + ethanolamine. The enzyme catalyses a 1-acyl-sn-glycero-3-phosphocholine = a 1-acyl-sn-glycero-2,3-cyclic phosphate + choline. It catalyses the reaction a 1-acyl-sn-glycero-3-phosphoethanolamine = a 1-acyl-sn-glycero-2,3-cyclic phosphate + ethanolamine. In terms of biological role, dermonecrotic toxins cleave the phosphodiester linkage between the phosphate and headgroup of certain phospholipids (sphingolipid and lysolipid substrates), forming an alcohol (often choline) and a cyclic phosphate. This toxin acts on sphingomyelin (SM). It may also act on ceramide phosphoethanolamine (CPE), lysophosphatidylcholine (LPC) and lysophosphatidylethanolamine (LPE), but not on lysophosphatidylserine (LPS), and lysophosphatidylglycerol (LPG). It acts by transphosphatidylation, releasing exclusively cyclic phosphate products as second products. Induces dermonecrosis, hemolysis, increased vascular permeability, edema, inflammatory response, and platelet aggregation. This is Dermonecrotic toxin SdSicTox-betaIIB1biv from Sicarius cf. damarensis (strain GJB-2008) (Six-eyed sand spider).